The chain runs to 879 residues: MKVYGVNELRKMYLDFFESKGHLKLNSFSLVPQNDKSLLLINSGMAPLKPYFTGQEIPPKKRVTTCQKCIRTGDIENIGKTARHGTFFEMLGNFSFGDYFKHEAIAWSWEFLTEVVGLSGDRLYPSIYLEDDEAFDIWNKEVGIAPERIFRMGKADNFWEHGAGPCGPCSEIYYDRGEKYGCGDPNCTVGCECDRFIEVWNNVFTQFNSDGNGNYEELENKNIDTGMGLERLAVVVQDVDTLFDIDTMKAIRDHVCKMANAEYKVDPKKDMSIRLITDHIRSVTFMTSDGIIPSNEGRGYVLRRLLRRAARHGRLLGIQGKFLAELSKTVIAESKDGYPELEEKKEYILKVLTIEEEKFNKTIDQGLSILSEMEEALVSNGTKTLNGEDAFKLYDTYGFPLDLTKEILEEKGFSIDEEGFKKAMQVQRETARSARAVTNYMGADASIYDEIDPAITSNFVGYDRTSHTSKISVLTTETDLTDEVVGGQTATIIVDETPFYATMGGQTADIGFIVGKDAEFEVEDTIKLKGGRVGHLGTVTKGSFKVGETVTLTIDTQKRQAIGKNHSATHLLQKALRNVLGSHVEQAGSFVTSERLRFDFTHFSALTKEEIAKVEAMVNEEIAKNVPVVTDVMSVEDAKKSGAMALFGEKYGDSVRVVTMGDFSKELCGGTHVANTGSITVFKILSEAGIAAGVRRIEAITSNAVFEYYKSMEEELHEAAKVAKTEPASLVKRIESLQEELKTALSENEKLKAKLANNSLGDVMNQVVEVKGVKLLASKVTDADMNGLRNLGDQLKEKLGECVILLASASEDKVNLIAMATDGAMAKGAHAGNLIKEVAVLVGGGGGGRPNMAQAGGKNPSGIDAAIEKAVSVVENQIK.

Positions 566, 570, 668, and 672 each coordinate Zn(2+).

It belongs to the class-II aminoacyl-tRNA synthetase family. The cofactor is Zn(2+).

The protein localises to the cytoplasm. The catalysed reaction is tRNA(Ala) + L-alanine + ATP = L-alanyl-tRNA(Ala) + AMP + diphosphate. Functionally, catalyzes the attachment of alanine to tRNA(Ala) in a two-step reaction: alanine is first activated by ATP to form Ala-AMP and then transferred to the acceptor end of tRNA(Ala). Also edits incorrectly charged Ser-tRNA(Ala) and Gly-tRNA(Ala) via its editing domain. This Lachnoclostridium phytofermentans (strain ATCC 700394 / DSM 18823 / ISDg) (Clostridium phytofermentans) protein is Alanine--tRNA ligase 1.